A 201-amino-acid polypeptide reads, in one-letter code: Superoxide dismutase [Mn/Fe] (201 aa).

Fe(3+) is bound by residues His-27, His-81, Asp-162, and His-166. Residues His-27, His-81, Asp-162, and His-166 each contribute to the Mn(2+) site.

Belongs to the iron/manganese superoxide dismutase family. As to quaternary structure, homodimer. The cofactor is Mn(2+). It depends on Fe(3+) as a cofactor.

It catalyses the reaction 2 superoxide + 2 H(+) = H2O2 + O2. Destroys superoxide anion radicals which are normally produced within the cells and which are toxic to biological systems. Catalyzes the dismutation of superoxide anion radicals into O2 and H2O2 by successive reduction and oxidation of the transition metal ion at the active site. The chain is Superoxide dismutase [Mn/Fe] (sodA) from Staphylococcus carnosus.